Here is a 367-residue protein sequence, read N- to C-terminus: 3-methyl-2-oxobutanoate dehydrogenase subunit alpha (367 aa).

Thiamine diphosphate-binding positions include 99 to 101, 141 to 142, 170 to 176, 200 to 204, and histidine 269; these read QYR, PI, GDGATSE, and NQWAI. Tyrosine 100 contacts substrate. Residues aspartate 171 and asparagine 200 each coordinate Mg(2+).

As to quaternary structure, heteromer of E1 alpha (BkdA) and beta (BkdB) subunits. Part of the BCKADH complex, consisting of multiple copies of BkdA/BkdB (E1), BkdC (E2) and Lpd (E3). It depends on Mg(2+) as a cofactor. The cofactor is thiamine diphosphate.

The catalysed reaction is N(6)-[(R)-lipoyl]-L-lysyl-[protein] + 3-methyl-2-oxobutanoate + H(+) = N(6)-[(R)-S(8)-2-methylpropanoyldihydrolipoyl]-L-lysyl-[protein] + CO2. Component of the branched-chain alpha-ketoacid dehydrogenase (BCKADH) complex, that catalyzes the overall conversion of branched-chain alpha-ketoacids to acyl-CoA and CO(2). The protein is 3-methyl-2-oxobutanoate dehydrogenase subunit alpha (bkdA) of Mycobacterium tuberculosis (strain CDC 1551 / Oshkosh).